The chain runs to 1434 residues: Probable ATP-dependent DNA helicase HFM1 (1434 aa).

The 188-residue stretch at 289 to 476 (DDLLYTDRNF…WLSDGERPAV (188 aa)) folds into the Helicase ATP-binding domain. Residue 302-309 (APTGSGKT) coordinates ATP. The short motif at 410–413 (DEVH) is the DEAH box element. Positions 514–718 (KVYSVIRTYS…DVNIALDWIR (205 aa)) constitute a Helicase C-terminal domain. The SEC63 domain maps to 775–1089 (PTEAGRLMAW…VGLDIHQKFT (315 aa)). A disordered region spans residues 1110 to 1130 (TDISHSDYSGRATATGSSKGM). The C4-type zinc finger occupies 1141 to 1156 (CHHHCKNKHACGHDCC). Positions 1294–1333 (GFGDTRDSSLGGSKLPFQKSSSRFQRDNSNSFASSPGKPD) are disordered. Polar residues predominate over residues 1311 to 1327 (QKSSSRFQRDNSNSFAS).

This sequence belongs to the helicase family. SKI2 subfamily. Zn(2+) serves as cofactor.

The catalysed reaction is Couples ATP hydrolysis with the unwinding of duplex DNA by translocating in the 3'-5' direction.. The enzyme catalyses ATP + H2O = ADP + phosphate + H(+). Required for crossover formation and complete synapsis of homologous chromosomes during meiosis. In Mus musculus (Mouse), this protein is Probable ATP-dependent DNA helicase HFM1.